The primary structure comprises 634 residues: (-)-limonene synthase, chloroplastic (634 aa).

The transit peptide at 1 to 21 (MSPVSAIPLAYKLCLPRSLIS) directs the protein to the chloroplast. The (2E)-geranyl diphosphate site is built by arginine 348, aspartate 385, aspartate 389, arginine 526, and glycine 529. Positions 385 and 389 each coordinate Mg(2+). The DDXXD motif signature appears at 385–389 (DDIYD). Mg(2+) is bound by residues glycine 529 and aspartate 537.

Belongs to the terpene synthase family. Tpsb subfamily. In terms of assembly, monomer. Requires Mg(2+) as cofactor. The cofactor is Mn(2+).

The protein resides in the plastid. It localises to the chloroplast. It catalyses the reaction (2E)-geranyl diphosphate = (4S)-limonene + diphosphate. It participates in secondary metabolite biosynthesis; terpenoid biosynthesis. It functions in the pathway terpene metabolism; oleoresin biosynthesis. Functionally, monoterpene synthase (mono-TPS) involved in the biosynthesis of monoterpene natural products. Catalyzes the conversion of (2E)-geranyl diphosphate (GPP) into (-)-limonene. Not able to use geranylgeranyl pyrophosphate (GGPP) and farnesyl pyrophosphate (FPP) as substrates. This is (-)-limonene synthase, chloroplastic from Picea sitchensis (Sitka spruce).